Reading from the N-terminus, the 54-residue chain is Large ribosomal subunit protein bL33 (54 aa).

The protein belongs to the bacterial ribosomal protein bL33 family.

This is Large ribosomal subunit protein bL33 from Corynebacterium diphtheriae (strain ATCC 700971 / NCTC 13129 / Biotype gravis).